We begin with the raw amino-acid sequence, 186 residues long: Elongation factor P (186 aa).

It belongs to the elongation factor P family.

It localises to the cytoplasm. Its pathway is protein biosynthesis; polypeptide chain elongation. Functionally, involved in peptide bond synthesis. Stimulates efficient translation and peptide-bond synthesis on native or reconstituted 70S ribosomes in vitro. Probably functions indirectly by altering the affinity of the ribosome for aminoacyl-tRNA, thus increasing their reactivity as acceptors for peptidyl transferase. The sequence is that of Elongation factor P from Cupriavidus metallidurans (strain ATCC 43123 / DSM 2839 / NBRC 102507 / CH34) (Ralstonia metallidurans).